Here is a 286-residue protein sequence, read N- to C-terminus: Ribosomal RNA small subunit methyltransferase A (286 aa).

Positions 11, 13, 44, 65, 90, and 115 each coordinate S-adenosyl-L-methionine.

It belongs to the class I-like SAM-binding methyltransferase superfamily. rRNA adenine N(6)-methyltransferase family. RsmA subfamily.

The protein resides in the cytoplasm. The catalysed reaction is adenosine(1518)/adenosine(1519) in 16S rRNA + 4 S-adenosyl-L-methionine = N(6)-dimethyladenosine(1518)/N(6)-dimethyladenosine(1519) in 16S rRNA + 4 S-adenosyl-L-homocysteine + 4 H(+). Functionally, specifically dimethylates two adjacent adenosines (A1518 and A1519) in the loop of a conserved hairpin near the 3'-end of 16S rRNA in the 30S particle. May play a critical role in biogenesis of 30S subunits. The protein is Ribosomal RNA small subunit methyltransferase A of Nostoc punctiforme (strain ATCC 29133 / PCC 73102).